A 120-amino-acid polypeptide reads, in one-letter code: Large ribosomal subunit protein bL19 (120 aa).

It belongs to the bacterial ribosomal protein bL19 family.

This protein is located at the 30S-50S ribosomal subunit interface and may play a role in the structure and function of the aminoacyl-tRNA binding site. The polypeptide is Large ribosomal subunit protein bL19 (Microcystis aeruginosa (strain NIES-843 / IAM M-2473)).